The chain runs to 158 residues: Disulfide bond formation protein B (158 aa).

Topologically, residues 1–7 (MKNSRPV) are cytoplasmic. The chain crosses the membrane as a helical span at residues 8 to 24 (LFAVALASLLLLAVALY). The Periplasmic portion of the chain corresponds to 25-42 (LQHVENMLPCPLCVIQRY). Cysteines 34 and 37 form a disulfide. The helical transmembrane segment at 43 to 57 (AFAAIALICLVTAFR) threads the bilayer. Residues 58–63 (TEVTAR) lie on the Cytoplasmic side of the membrane. The helical transmembrane segment at 64–81 (IGAALAALASLAGAGVAG) threads the bilayer. Topologically, residues 82-136 (WHIYIKAHPTVSCGIDPLETSLNTIPTAKLLPFLLQADGLCTTEYAPIMGLSIPQ) are periplasmic. Residues cysteine 94 and cysteine 122 are joined by a disulfide bond. Residues 137-155 (WALVWFIVIALFLLHTAFR) traverse the membrane as a helical segment. Over 156–158 (KKS) the chain is Cytoplasmic.

The protein belongs to the DsbB family.

Its subcellular location is the cell inner membrane. In terms of biological role, required for disulfide bond formation in some periplasmic proteins. Acts by oxidizing the DsbA protein. The chain is Disulfide bond formation protein B from Herminiimonas arsenicoxydans.